The following is a 452-amino-acid chain: Neuronal acetylcholine receptor subunit alpha-5 (452 aa).

Positions 1–27 (MVQLLAGRWRPTGARRGTRGGLPELSS) are cleaved as a signal peptide. The Extracellular segment spans residues 28 to 239 (AAKHEDSLFR…VIKRLPLFYT (212 aa)). 3 N-linked (GlcNAc...) asparagine glycosylation sites follow: Asn140, Asn168, and Asn214. Cys155 and Cys169 form a disulfide bridge. Cys219 and Cys220 are joined by a disulfide. 3 consecutive transmembrane segments (helical) span residues 240–260 (LFLIIPCIGLSFLTVVVFYLP), 269–289 (LCTSVLVSLTVFLLVIEEIIP), and 302–322 (LVFTMIFVTLSIMVTVFAINI). The Cytoplasmic portion of the chain corresponds to 323–414 (HHRSSSTHNA…KFIAQVLDRM (92 aa)). Residues 415–435 (FLWTFLLVSIIGTLGLFVPVI) form a helical membrane-spanning segment. Residues 436-452 (YKWANIIVPVHIGNTIK) are Extracellular-facing.

The protein belongs to the ligand-gated ion channel (TC 1.A.9) family. Acetylcholine receptor (TC 1.A.9.1) subfamily. Alpha-5/CHRNA5 sub-subfamily. In terms of assembly, neuronal AChR that forms heteropentamers composed of two different type of subunits: alpha and non-alpha (beta). CHRNA5/alpha-5 subunit is only able to form functional nAChRs when co-assembled with another alpha subunit, can be combined to CHRNA4/alpha-4 or CHRNA3/alpha-3 and CHRNB4/beta-4 or CHRNB2/beta-2 to give rise to functional receptors. Interacts with LYPD6.

Its subcellular location is the synaptic cell membrane. The protein resides in the cell membrane. It catalyses the reaction Ca(2+)(in) = Ca(2+)(out). The catalysed reaction is K(+)(in) = K(+)(out). It carries out the reaction Na(+)(in) = Na(+)(out). Its activity is regulated as follows. Activated by a myriad of ligands such as acetylcholine, cytisine, nicotine, choline and epibatidine. In terms of biological role, component of neuronal acetylcholine receptors (nAChRs) that function as pentameric, ligand-gated cation channels with high calcium permeability among other activities. nAChRs are excitatory neurotrasnmitter receptors formed by a collection of nAChR subunits known to mediate synaptic transmission in the nervous system and the neuromuscular junction. Each nAchR subunit confers differential attributes to channel properties, including activation, deactivation and desensitization kinetics, pH sensitivity, cation permeability, and binding to allosteric modulators. Has an accessory rather than functional role and is only able to form functional nAChRs when co-assembled with another beta subunit. Participates in pentameric assemblies along with CHRNA3, CHRNA4, CHRNB2 and CHRNB4. Increases receptor sensitivity to acetylcholine and nicotine when associated with CHRNA4 and CHRNB2. Plays a role in nicotine addiction. In Rattus norvegicus (Rat), this protein is Neuronal acetylcholine receptor subunit alpha-5 (Chrna5).